A 119-amino-acid chain; its full sequence is MIGIDIVSIARIEKCVKRFEMRFLERFLSPSEIVLCKDKSSSIAGFFALKEACSKALQVGIGKELSFLDMRISKSPKNAPLITLSKEKMDYFNIQSLSASISHDAGFAIAVVMVSSSNL.

Aspartate 5 and glutamate 51 together coordinate Mg(2+).

This sequence belongs to the P-Pant transferase superfamily. AcpS family. Mg(2+) serves as cofactor.

Its subcellular location is the cytoplasm. The catalysed reaction is apo-[ACP] + CoA = holo-[ACP] + adenosine 3',5'-bisphosphate + H(+). Its function is as follows. Transfers the 4'-phosphopantetheine moiety from coenzyme A to a Ser of acyl-carrier-protein. The protein is Holo-[acyl-carrier-protein] synthase of Helicobacter pylori (strain J99 / ATCC 700824) (Campylobacter pylori J99).